We begin with the raw amino-acid sequence, 310 residues long: GPN-loop GTPase 2 (310 aa).

An N-acetylalanine modification is found at Ala2. 19–24 (GSGKTT) lines the GTP pocket. Residues 76 to 78 (GPN) carry the Gly-Pro-Asn (GPN)-loop; involved in dimer interface motif. Residue 178 to 181 (SKMD) participates in GTP binding.

It belongs to the GPN-loop GTPase family. As to quaternary structure, heterodimers with GPN1 or GPN3. Binds to RNA polymerase II (RNAPII).

Functionally, small GTPase required for proper localization of RNA polymerase II and III (RNAPII and RNAPIII). May act at an RNAP assembly step prior to nuclear import. This is GPN-loop GTPase 2 from Homo sapiens (Human).